The following is a 415-amino-acid chain: Serine hydroxymethyltransferase (415 aa).

(6S)-5,6,7,8-tetrahydrofolate is bound by residues Leu-121 and 125 to 127 (GHL). Position 230 is an N6-(pyridoxal phosphate)lysine (Lys-230). 355 to 357 (SPF) is a (6S)-5,6,7,8-tetrahydrofolate binding site.

It belongs to the SHMT family. Homodimer. It depends on pyridoxal 5'-phosphate as a cofactor.

It is found in the cytoplasm. The catalysed reaction is (6R)-5,10-methylene-5,6,7,8-tetrahydrofolate + glycine + H2O = (6S)-5,6,7,8-tetrahydrofolate + L-serine. The protein operates within one-carbon metabolism; tetrahydrofolate interconversion. It functions in the pathway amino-acid biosynthesis; glycine biosynthesis; glycine from L-serine: step 1/1. Its function is as follows. Catalyzes the reversible interconversion of serine and glycine with tetrahydrofolate (THF) serving as the one-carbon carrier. This reaction serves as the major source of one-carbon groups required for the biosynthesis of purines, thymidylate, methionine, and other important biomolecules. Also exhibits THF-independent aldolase activity toward beta-hydroxyamino acids, producing glycine and aldehydes, via a retro-aldol mechanism. The protein is Serine hydroxymethyltransferase of Lactococcus lactis subsp. cremoris (strain SK11).